Reading from the N-terminus, the 912-residue chain is Non-lysosomal glucosylceramidase (912 aa).

The tract at residues 886-912 is disordered; it reads HKKNSSRPAVTQGTAPSQPECGPKRSL. Positions 891–902 are enriched in polar residues; it reads SRPAVTQGTAPS.

Belongs to the non-lysosomal glucosylceramidase family.

The protein resides in the endoplasmic reticulum membrane. It localises to the golgi apparatus membrane. It carries out the reaction a beta-D-glucosyl-(1&lt;-&gt;1')-N-acylsphing-4-enine + H2O = an N-acylsphing-4-enine + D-glucose. The catalysed reaction is a beta-D-galactosyl-(1&lt;-&gt;1')-N-acylsphing-4-enine + H2O = an N-acylsphing-4-enine + D-galactose. The enzyme catalyses beta-D-glucosyl-(1-&gt;3)-O-lithocholate + H2O = lithocholate + D-glucose. It catalyses the reaction beta-D-glucosyl-(1-&gt;3)-O-chenodeoxycholate + H2O = chenodeoxycholate + D-glucose. It carries out the reaction a di-trans,poly-cis-dolichyl beta-D-glucosyl phosphate + chenodeoxycholate = beta-D-glucosyl-(1-&gt;3)-O-chenodeoxycholate + a di-trans,poly-cis-dolichyl phosphate + H(+). The catalysed reaction is octyl beta-D-glucose + chenodeoxycholate = beta-D-glucosyl-(1-&gt;3)-O-chenodeoxycholate + octan-1-ol. The enzyme catalyses cholesteryl 3-beta-D-glucoside + H2O = cholesterol + D-glucose. It catalyses the reaction a beta-D-glucosyl-(1&lt;-&gt;1')-N-acylsphing-4-enine + cholesterol = cholesteryl 3-beta-D-glucoside + an N-acylsphing-4-enine. It carries out the reaction beta-D-glucosyl-N-(9Z-octadecenoyl)-sphing-4E-enine + cholesterol = N-(9Z-octadecenoyl)-sphing-4-enine + cholesteryl 3-beta-D-glucoside. The catalysed reaction is a beta-D-galactosyl-(1&lt;-&gt;1')-N-acylsphing-4-enine + cholesterol = cholesteryl 3-beta-D-galactoside + an N-acylsphing-4-enine. The enzyme catalyses 1-(beta-D-galactosyl)-N-dodecanoylsphing-4-enine + cholesterol = cholesteryl 3-beta-D-galactoside + N-dodecanoylsphing-4-enine. The protein operates within lipid metabolism; sphingolipid metabolism. Its pathway is steroid metabolism; cholesterol metabolism. Its activity is regulated as follows. Enzymatic activity is dependent on membrane association and requires the presence of lipids. Non-lysosomal glucosylceramidase that catalyzes the hydrolysis of glucosylceramides/GlcCers (such as beta-D-glucosyl-(1&lt;-&gt;1')-N-acylsphing-4-enine) to free glucose and ceramides (such as N-acylsphing-4-enine). GlcCers are membrane glycosphingolipids that have a wide intracellular distribution. They are the main precursors of more complex glycosphingolipids that play a role in cellular growth, differentiation, adhesion, signaling, cytoskeletal dynamics and membrane properties. Involved in the transglucosylation of cholesterol, transfers glucose from GlcCer to cholesterol, thereby modifying its water solubility and biological properties. Under specific conditions, may catalyze the reverse reaction, transferring glucose from cholesteryl-3-beta-D-glucoside to ceramide (such as N-acylsphing-4-enine). May play a role in the metabolism of bile acids. Able to hydrolyze bile acid 3-O-glucosides as well as to produce bile acid-glucose conjugates thanks to a bile acid glucosyl transferase activity. Catalyzes the hydrolysis of galactosylceramides/GalCers (such as beta-D-galactosyl-(1&lt;-&gt;1')-N-acylsphing-4-enine), as well as the galactosyl transfer between GalCers and cholesterol in vitro with lower activity compared with their activity against GlcCers. The chain is Non-lysosomal glucosylceramidase from Rattus norvegicus (Rat).